The chain runs to 57 residues: UPF0391 membrane protein BRADO5617 (57 aa).

A run of 2 helical transmembrane segments spans residues 1–21 (MLGW…LGFG) and 30–50 (IAKI…VVGL).

The protein belongs to the UPF0391 family.

The protein resides in the cell membrane. This Bradyrhizobium sp. (strain ORS 278) protein is UPF0391 membrane protein BRADO5617.